The following is a 181-amino-acid chain: Large ribosomal subunit protein uL5 (181 aa).

This sequence belongs to the universal ribosomal protein uL5 family. In terms of assembly, part of the 50S ribosomal subunit; part of the 5S rRNA/L5/L18/L25 subcomplex. Contacts the 5S rRNA and the P site tRNA. Forms a bridge to the 30S subunit in the 70S ribosome.

Functionally, this is one of the proteins that bind and probably mediate the attachment of the 5S RNA into the large ribosomal subunit, where it forms part of the central protuberance. In the 70S ribosome it contacts protein S13 of the 30S subunit (bridge B1b), connecting the 2 subunits; this bridge is implicated in subunit movement. Contacts the P site tRNA; the 5S rRNA and some of its associated proteins might help stabilize positioning of ribosome-bound tRNAs. The sequence is that of Large ribosomal subunit protein uL5 from Helicobacter pylori (strain HPAG1).